The chain runs to 111 residues: Cell division protein FtsB (111 aa).

Residues 1–3 (MRL) lie on the Cytoplasmic side of the membrane. The helical transmembrane segment at 4–21 (LFLVLLVLLGLIQYPLWL) threads the bilayer. The Periplasmic segment spans residues 22 to 111 (GKGGWFKVWD…PGQTASAPRR (90 aa)). Positions 31 to 62 (DLQRQVAAQHETNDGLRARNAALEAEVRDLAT) form a coiled coil. A disordered region spans residues 88–111 (VPPGTPVPQPAPGAPGQTASAPRR). The segment covering 90–100 (PGTPVPQPAPG) has biased composition (pro residues). Low complexity predominate over residues 101–111 (APGQTASAPRR).

The protein belongs to the FtsB family. As to quaternary structure, part of a complex composed of FtsB, FtsL and FtsQ.

Its subcellular location is the cell inner membrane. Functionally, essential cell division protein. May link together the upstream cell division proteins, which are predominantly cytoplasmic, with the downstream cell division proteins, which are predominantly periplasmic. This is Cell division protein FtsB from Bordetella petrii (strain ATCC BAA-461 / DSM 12804 / CCUG 43448).